The primary structure comprises 712 residues: 1,4-alpha-glucan branching enzyme GlgB (712 aa).

Catalysis depends on Asp-397, which acts as the Nucleophile. Glu-450 (proton donor) is an active-site residue.

The protein belongs to the glycosyl hydrolase 13 family. GlgB subfamily. Monomer.

It carries out the reaction Transfers a segment of a (1-&gt;4)-alpha-D-glucan chain to a primary hydroxy group in a similar glucan chain.. It functions in the pathway glycan biosynthesis; glycogen biosynthesis. In terms of biological role, catalyzes the formation of the alpha-1,6-glucosidic linkages in glycogen by scission of a 1,4-alpha-linked oligosaccharide from growing alpha-1,4-glucan chains and the subsequent attachment of the oligosaccharide to the alpha-1,6 position. This chain is 1,4-alpha-glucan branching enzyme GlgB, found in Bradyrhizobium sp. (strain ORS 278).